A 506-amino-acid chain; its full sequence is Peptidyl-prolyl cis-trans isomerase CYP59 (506 aa).

One can recognise a PPIase cyclophilin-type domain in the interval 1–161 (MSVLIVTSLG…KNIRIKHTHI (161 aa)). In terms of domain architecture, RRM spans 243-321 (NVLFVCKLNP…RRIHVDFSQS (79 aa)). The CCHC-type zinc finger occupies 341-357 (GCFKCGSTDHIAKDCVG). Composition is skewed to basic and acidic residues over residues 388–404 (ETPK…EKIQ) and 412–506 (GEGK…RRDR). A disordered region spans residues 388 to 506 (ETPKHNSHER…REARHERRDR (119 aa)).

The protein belongs to the cyclophilin-type PPIase family. As to quaternary structure, component of the BZR1 complex. Interacts with NRPB1 (via CTD domain), SCL28, SCL30, SCL30A, SCL33, SC35, SR30, SR34, RSZ21, RS2Z33, RS31 and RS40. In terms of tissue distribution, ubiquitous.

It is found in the nucleus. It carries out the reaction [protein]-peptidylproline (omega=180) = [protein]-peptidylproline (omega=0). In terms of biological role, PPIases accelerate the folding of proteins. It catalyzes the cis-trans isomerization of proline imidic peptide bonds in oligopeptides. Influences somehow regulation of RNA pol II (CTD) phosphorylation. Binds RNA with preferences for GC-rich sequences. Probably involved in activities connecting transcription and pre-mRNA processing. Involved in brassinostroid response. This chain is Peptidyl-prolyl cis-trans isomerase CYP59 (CYP59), found in Arabidopsis thaliana (Mouse-ear cress).